The chain runs to 461 residues: UDP-glucosyltransferase 1 (461 aa).

Belongs to the UDP-glycosyltransferase family.

It participates in secondary metabolite biosynthesis. Its function is as follows. UDP-glucosyltransferase; part of the pathway that mediates the biosynthesis of tenellin-type 2-pyridones, iron-chelating compounds involved in iron stress tolerance, competition with the natural competitor fungus Metarhizium robertsii and insect hosts infection. Targets the N-OH hydroxyl residue of 15-hydroxytellenin (15-HT) to produce pyridovericin-N-O-(beta-D-glucopyranoside) which is further methylated by the methyltransferase MT1 to yield pyridovericin-N-O-(4-O-methyl-beta-D-glucopyranoside) (PMGP). The pathway begins with the assembly of the polyketide-amino acid backbone by the hybrid PKS-NRPS tenS with the help of the enoyl reductase tenC. These enzymes catalyze the synthesis of the pyrrolidine-2-dione intermediates pretellinin A, 11-hydropretellenin A, 12-hydropretellenin A, 13-hydropretellenin A, 14-hydropretellenin A, 12-oxopretellenin A and prototellinin D. The cytochrome P450 monooxygenase tenA then catalyzes an oxidative ring expansion of pretenellin A and 14-hydropretellenin A to form the 2-pyridone core, leading to pretenellin B and pyridovericin, respectively. The cytochrome P450 monooxygenase tenB is then required for the selective N-hydroxylation of the 2-pyridone nitrogen of yield tellinin and 15-hydroxytellenin (15-HT), respectively. The UDP-glucosyltransferase GT1 and the methyltransferase MT1, located outside the tenS gene cluster, contribute to the stepwise glycosylation and methylation of 15-HT to obtain the glycoside pyridovericin-N-O-(4-O-methyl-beta-D-glucopyranoside) (PMGP). Additional related compounds such as 1-O-methyl-15-HT, (8Z)-1-O-methyl-15-HT, and O-methyltenellin A are also produced but the enzymes involved in their biosynthesis have still to be determined. In Beauveria bassiana (strain ARSEF 2860) (White muscardine disease fungus), this protein is UDP-glucosyltransferase 1.